The primary structure comprises 1054 residues: DIS3-like exonuclease 1 (1054 aa).

The CSD1 domain occupies 236 to 313 (AGIKSGRYIQ…WKGRTAALCE (78 aa)). Residues 313-332 (ENDSEDKASGESPSEPMPTG) form a disordered region. One can recognise a CSD2 domain in the interval 365–431 (ILVTPWDYRI…GEIATILVEN (67 aa)). The RNB domain occupies 465–816 (RRDLRSTHLV…VHRLLMAAIS (352 aa)). S989 is modified (phosphoserine).

The protein belongs to the RNR ribonuclease family. Component of the RNA exosome complex. The catalytically inactive RNA exosome core (Exo-9) complex is believed to associate with catalytic subunits EXOSC10, and DIS3 or DIS3L in cytoplasmic- and nuclear-specific RNA exosome complex forms. Mg(2+) is required as a cofactor.

The protein resides in the cytoplasm. The catalysed reaction is Exonucleolytic cleavage in the 3'- to 5'-direction to yield nucleoside 5'-phosphates.. Catalytic component of the RNA exosome complex which has 3'-&gt;5' exoribonuclease activity and participates in a multitude of cellular RNA processing and degradation events. In the cytoplasm, the RNA exosome complex is involved in general mRNA turnover and specifically degrades inherently unstable mRNAs containing AU-rich elements (AREs) within their 3' untranslated regions, and in RNA surveillance pathways, preventing translation of aberrant mRNAs. It seems to be involved in degradation of histone mRNA. The sequence is that of DIS3-like exonuclease 1 (Dis3l) from Rattus norvegicus (Rat).